A 61-amino-acid chain; its full sequence is Small ribosomal subunit protein uS14 (61 aa).

4 residues coordinate Zn(2+): C24, C27, C40, and C43.

It belongs to the universal ribosomal protein uS14 family. Zinc-binding uS14 subfamily. In terms of assembly, part of the 30S ribosomal subunit. Contacts proteins S3 and S10. Zn(2+) serves as cofactor.

In terms of biological role, binds 16S rRNA, required for the assembly of 30S particles and may also be responsible for determining the conformation of the 16S rRNA at the A site. The polypeptide is Small ribosomal subunit protein uS14 (Alkaliphilus metalliredigens (strain QYMF)).